Reading from the N-terminus, the 638-residue chain is Chaperone protein DnaK (638 aa).

Thr-198 is subject to Phosphothreonine; by autocatalysis. Positions 600–638 are disordered; the sequence is KTQTEGGAQPGAEADGDTGAKGGEKVVDADFEEVKDDKK. The span at 628–638 shows a compositional bias: acidic residues; sequence ADFEEVKDDKK.

This sequence belongs to the heat shock protein 70 family.

Its function is as follows. Acts as a chaperone. The polypeptide is Chaperone protein DnaK (Geobacter metallireducens (strain ATCC 53774 / DSM 7210 / GS-15)).